A 30-amino-acid polypeptide reads, in one-letter code: NADH-ubiquinone oxidoreductase 18 kDa subunit (30 aa).

In terms of assembly, complex I is composed of about 45 different subunits.

The protein localises to the mitochondrion inner membrane. The catalysed reaction is a ubiquinone + NADH + 5 H(+)(in) = a ubiquinol + NAD(+) + 4 H(+)(out). Functionally, transfer of electrons from NADH to the respiratory chain. The immediate electron acceptor for the enzyme is believed to be ubiquinone. This chain is NADH-ubiquinone oxidoreductase 18 kDa subunit, found in Solanum tuberosum (Potato).